The sequence spans 136 residues: Small ribosomal subunit protein bS6 (136 aa).

The segment covering 117–130 (EERSRSSRRQREDV) has biased composition (basic and acidic residues). The segment at 117–136 (EERSRSSRRQREDVIEGVEL) is disordered.

It belongs to the bacterial ribosomal protein bS6 family.

Binds together with bS18 to 16S ribosomal RNA. This is Small ribosomal subunit protein bS6 from Bartonella quintana (strain Toulouse) (Rochalimaea quintana).